A 409-amino-acid polypeptide reads, in one-letter code: Pyruvate dehydrogenase E1 component subunit alpha, mitochondrial (409 aa).

At threonine 6 the chain carries Phosphothreonine. Positions 109, 135, 136, 174, 182, 184, 213, 214, 215, 242, and 244 each coordinate pyruvate. Thiamine diphosphate contacts are provided by tyrosine 135 and arginine 136. Positions 182, 184, 213, 214, 215, and 242 each coordinate thiamine diphosphate. Aspartate 213 lines the Mg(2+) pocket. The Mg(2+) site is built by asparagine 242 and tyrosine 244. Phosphotyrosine is present on tyrosine 306. Histidine 309 lines the thiamine diphosphate pocket. Serine 310 and serine 312 each carry phosphoserine.

As to quaternary structure, tetramer of 2 alpha and 2 beta subunits. It depends on thiamine diphosphate as a cofactor. Mg(2+) is required as a cofactor.

Its subcellular location is the mitochondrion matrix. The enzyme catalyses N(6)-[(R)-lipoyl]-L-lysyl-[protein] + pyruvate + H(+) = N(6)-[(R)-S(8)-acetyldihydrolipoyl]-L-lysyl-[protein] + CO2. E1 activity is regulated by phosphorylation (inactivation) and dephosphorylation (activation) of the alpha subunit. The pyruvate dehydrogenase complex catalyzes the overall conversion of pyruvate to acetyl-CoA and CO(2). It contains multiple copies of three enzymatic components: pyruvate dehydrogenase (E1), dihydrolipoamide acetyltransferase (E2) and lipoamide dehydrogenase (E3). This chain is Pyruvate dehydrogenase E1 component subunit alpha, mitochondrial (pda1), found in Schizosaccharomyces pombe (strain 972 / ATCC 24843) (Fission yeast).